Reading from the N-terminus, the 112-residue chain is UPF0212 protein Mpal_1084 (112 aa).

Belongs to the UPF0212 family.

The chain is UPF0212 protein Mpal_1084 from Methanosphaerula palustris (strain ATCC BAA-1556 / DSM 19958 / E1-9c).